We begin with the raw amino-acid sequence, 322 residues long: Hydrolase C26A3.11 (322 aa).

The 247-residue stretch at 44–290 (FRIGLVQLAN…PSIVYADIDP (247 aa)) folds into the CN hydrolase domain. Glu-83 serves as the catalytic Proton acceptor. Lys-154 functions as the Proton donor in the catalytic mechanism. The Nucleophile role is filled by Cys-195.

This sequence belongs to the carbon-nitrogen hydrolase superfamily. NIT1/NIT2 family.

The polypeptide is Hydrolase C26A3.11 (Schizosaccharomyces pombe (strain 972 / ATCC 24843) (Fission yeast)).